Reading from the N-terminus, the 33-residue chain is AVCVYRTCDKDCKRRGYRSGKCINNACKCYPYA.

3 disulfides stabilise this stretch: cysteine 3-cysteine 22, cysteine 8-cysteine 27, and cysteine 12-cysteine 29.

The protein belongs to the short scorpion toxin superfamily. Potassium channel inhibitor family. Alpha-KTx 10 subfamily. In terms of tissue distribution, expressed by the venom gland.

It is found in the secreted. In terms of biological role, blocks human voltage-gated potassium channel Kv1.2/KCNA2 (IC(50)=3.6 nM) and Kv1.3/KCNA3 (IC(50)=72 nM). The sequence is that of Potassium channel toxin alpha-KTx 10.4 from Centruroides tecomanus (Scorpion).